We begin with the raw amino-acid sequence, 218 residues long: Glycoprotein UL1 (218 aa).

An N-terminal signal peptide occupies residues 1–27; that stretch reads MGVQCNSKLLLLAVLITIILSSILVQA. A helical transmembrane segment spans residues 178 to 198; it reads VATHVGWTATVVIIICVLTYV.

This sequence belongs to the RL11 family.

The protein resides in the virion membrane. In Homo sapiens (Human), this protein is Glycoprotein UL1 (UL1).